The sequence spans 158 residues: SsrA-binding protein (158 aa).

The protein belongs to the SmpB family.

Its subcellular location is the cytoplasm. Required for rescue of stalled ribosomes mediated by trans-translation. Binds to transfer-messenger RNA (tmRNA), required for stable association of tmRNA with ribosomes. tmRNA and SmpB together mimic tRNA shape, replacing the anticodon stem-loop with SmpB. tmRNA is encoded by the ssrA gene; the 2 termini fold to resemble tRNA(Ala) and it encodes a 'tag peptide', a short internal open reading frame. During trans-translation Ala-aminoacylated tmRNA acts like a tRNA, entering the A-site of stalled ribosomes, displacing the stalled mRNA. The ribosome then switches to translate the ORF on the tmRNA; the nascent peptide is terminated with the 'tag peptide' encoded by the tmRNA and targeted for degradation. The ribosome is freed to recommence translation, which seems to be the essential function of trans-translation. The sequence is that of SsrA-binding protein from Acinetobacter baumannii (strain AB307-0294).